The primary structure comprises 1935 residues: Myosin heavy chain, fast skeletal muscle (1935 aa).

Residues 32 to 81 (DAKTAFFVVDPDEMYLKGTLVSKEGGKATVKTHSGKTVTVKEDEIFPMNP) form the Myosin N-terminal SH3-like domain. Residues 85 to 779 (DKIEDMAMMT…LLGALEEMRD (695 aa)) enclose the Myosin motor domain. N6,N6,N6-trimethyllysine is present on K129. 178–185 (GESGAGKT) provides a ligand contact to ATP. Actin-binding regions lie at residues 659–681 (LMTN…ESKT) and 761–775 (HTKV…GALE). Residues 782 to 811 (LALLVTMTQALCRGYVMRKEFVKMMERRES) enclose the IQ domain. A hinge region spans residues 812–839 (IYSIQYNIRSFMNVKHWPWMKLYFKIKP). Residues 840–1935 (LLKSAETEKE…RDAGKSKDEE (1096 aa)) are a coiled coil. Disordered regions lie at residues 1589 to 1608 (RNSQ…EVRS) and 1902 to 1935 (HELE…KDEE). A compositionally biased stretch (polar residues) spans 1592 to 1603 (QRVIDSMQSTLD). Basic and acidic residues-rich tracts occupy residues 1902-1913 (HELEEAQERADV) and 1924-1935 (KSRDAGKSKDEE).

It belongs to the TRAFAC class myosin-kinesin ATPase superfamily. Myosin family. As to quaternary structure, muscle myosin is a hexameric protein that consists of 2 heavy chain subunits (MHC), 2 alkali light chain subunits (MLC) and 2 regulatory light chain subunits (MLC-2).

Its subcellular location is the cytoplasm. The protein resides in the myofibril. Muscle contraction. This chain is Myosin heavy chain, fast skeletal muscle, found in Cyprinus carpio (Common carp).